The following is a 273-amino-acid chain: Dermonecrotic toxin LspaSicTox-alphaIA2i (273 aa).

Histidine 5 is a catalytic residue. Mg(2+) contacts are provided by glutamate 25 and aspartate 27. Catalysis depends on histidine 41, which acts as the Nucleophile. 2 disulfide bridges follow: cysteine 45–cysteine 51 and cysteine 47–cysteine 190. Residue aspartate 85 participates in Mg(2+) binding.

Belongs to the arthropod phospholipase D family. Class II subfamily. Requires Mg(2+) as cofactor. In terms of tissue distribution, expressed by the venom gland.

The protein localises to the secreted. The enzyme catalyses an N-(acyl)-sphingosylphosphocholine = an N-(acyl)-sphingosyl-1,3-cyclic phosphate + choline. It carries out the reaction an N-(acyl)-sphingosylphosphoethanolamine = an N-(acyl)-sphingosyl-1,3-cyclic phosphate + ethanolamine. The catalysed reaction is a 1-acyl-sn-glycero-3-phosphocholine = a 1-acyl-sn-glycero-2,3-cyclic phosphate + choline. It catalyses the reaction a 1-acyl-sn-glycero-3-phosphoethanolamine = a 1-acyl-sn-glycero-2,3-cyclic phosphate + ethanolamine. In terms of biological role, dermonecrotic toxins cleave the phosphodiester linkage between the phosphate and headgroup of certain phospholipids (sphingolipid and lysolipid substrates), forming an alcohol (often choline) and a cyclic phosphate. This toxin acts on sphingomyelin (SM). It may also act on ceramide phosphoethanolamine (CPE), lysophosphatidylcholine (LPC) and lysophosphatidylethanolamine (LPE), but not on lysophosphatidylserine (LPS), and lysophosphatidylglycerol (LPG). It acts by transphosphatidylation, releasing exclusively cyclic phosphate products as second products. Induces dermonecrosis, hemolysis, increased vascular permeability, edema, inflammatory response, and platelet aggregation. This chain is Dermonecrotic toxin LspaSicTox-alphaIA2i, found in Loxosceles spadicea (Recluse spider).